We begin with the raw amino-acid sequence, 536 residues long: MKSVILLSLAACAVAAPTAGVETIHDGAAPILSSSNAEAIPNAYIIKFKKHVDHKSAADHQMWIQKVHGEREDERLELRKRGLFDSVNDAFTGLKHTYNVGSGFLGYAGHFDEETIEKVRRHPDVEAIERDTIVHTMRYEEVKKDECNPDLEKGAPWGLSRVSHRESLSFSTYNKYLYSAEGGEGVDAYVIDTGTNIDHVDFEGRAHWGKTIPANDQDIDGNGHGTHCSGTVAGKKYGVAKKAQVYAVKVLKSNGSGTMSDVIAGVDFAAKSHKAQVSAAKDGKRKGFKGSVANMSLGGGKTTLLDAAVNAAVDAGIHFAVAAGNDNADACNYSPAAAAKAVTVGASALDDSRAYFSNWGKCTDIFAPGLNIQSTWIGSKTAINTISGTSMASPHIAGLLAYYLSLQPASDSEYSLATITPEKLKADLIKVGTVGILTDIPKDTPNVLAWNGGGCSNYFEIVSKGGYKAKAQADKSSSLLDSVTELEKAIEHDFRVISGKVVKEASSMTGQAEKLSEKIHQAVDEELKHFFGEARV.

The first 15 residues, 1–15 (MKSVILLSLAACAVA), serve as a signal peptide directing secretion. A propeptide spanning residues 16-147 (APTAGVETIH…RYEEVKKDEC (132 aa)) is cleaved from the precursor. The 94-residue stretch at 44–137 (YIIKFKKHVD…IERDTIVHTM (94 aa)) folds into the Inhibitor I9 domain. The Peptidase S8 domain maps to 156-462 (PWGLSRVSHR…GGCSNYFEIV (307 aa)). Active-site charge relay system residues include Asp192 and His224. Asn254 and Asn294 each carry an N-linked (GlcNAc...) asparagine glycan. Residue Ser390 is the Charge relay system of the active site.

This sequence belongs to the peptidase S8 family.

Its subcellular location is the vacuole. This is Subtilisin-like proteinase Spm1 (SPM1) from Pyricularia oryzae (strain 70-15 / ATCC MYA-4617 / FGSC 8958) (Rice blast fungus).